A 137-amino-acid chain; its full sequence is S-protein homolog 16 (137 aa).

A signal peptide spans 1-21 (MKNLLVFIFVFSLCMFDHVSG). Asparagine 87 carries an N-linked (GlcNAc...) asparagine glycan.

Belongs to the plant self-incompatibility (S1) protein family.

It localises to the secreted. The polypeptide is S-protein homolog 16 (Arabidopsis thaliana (Mouse-ear cress)).